The chain runs to 101 residues: Putative membrane protein insertion efficiency factor (101 aa).

This sequence belongs to the UPF0161 family.

Its subcellular location is the cell membrane. In terms of biological role, could be involved in insertion of integral membrane proteins into the membrane. This Lacticaseibacillus casei (strain BL23) (Lactobacillus casei) protein is Putative membrane protein insertion efficiency factor.